A 113-amino-acid chain; its full sequence is DTIFGKIISKEIPSTVVYEDDKVLAFRDITPQGPVHILLIPKVRDGLTGLFKAEERHIDILGRLLYTAKLVAKQEGLDEGFRIVINDGPQGCQSVYHIHVHLIGGRQMNWPPG.

The HIT domain maps to 3-113 (IFGKIISKEI…GGRQMNWPPG (111 aa)). The short motif at 97–101 (HIHVH) is the Histidine triad motif element.

In terms of assembly, homodimer.

This chain is 14 kDa zinc-binding protein, found in Brassica juncea (Indian mustard).